The chain runs to 197 residues: Translation initiation factor IF-3 (197 aa).

The protein belongs to the IF-3 family. Monomer.

It is found in the cytoplasm. Its function is as follows. IF-3 binds to the 30S ribosomal subunit and shifts the equilibrium between 70S ribosomes and their 50S and 30S subunits in favor of the free subunits, thus enhancing the availability of 30S subunits on which protein synthesis initiation begins. This chain is Translation initiation factor IF-3, found in Prosthecochloris aestuarii (strain DSM 271 / SK 413).